A 311-amino-acid chain; its full sequence is Replication initiation protein (311 aa).

Belongs to the plasmid replication initiation factor family.

In terms of biological role, this protein is probably a specific topoisomerase involved in initiating replication. This protein is specifically required and may be rate-limiting for replication of the plasmid in vivo. The protein is Replication initiation protein (repD) of Staphylococcus aureus.